Here is a 450-residue protein sequence, read N- to C-terminus: Bicarbonate-binding protein CmpA (450 aa).

Positions 1–36 form a signal peptide, tat-type signal; the sequence is MNEFQPVNRRQFLFTLGATAASAILLKGCGNPPSSS.

Belongs to the CmpA/NrtA family. As to quaternary structure, the complex is composed of two ATP-binding proteins (CmpC and CmpD), a transmembrane protein (CmpB) and a solute-binding protein (CmpA). Post-translationally, predicted to be exported by the Tat system. The position of the signal peptide cleavage has not been experimentally proven. The N-terminus is blocked.

Its subcellular location is the cell inner membrane. Functionally, part of the ABC transporter complex CmpABCD involved in bicarbonate transport. Binds bicarbonate with high affinity. The sequence is that of Bicarbonate-binding protein CmpA (cmpA) from Synechococcus elongatus (strain ATCC 33912 / PCC 7942 / FACHB-805) (Anacystis nidulans R2).